Consider the following 418-residue polypeptide: Nuclear receptor coactivator 6 (418 aa).

Disordered stretches follow at residues 1–21 and 77–98; these read EQIMTNQMQGNKAQFNSQNQS and PPGPSPHMAQQHTDPATTANND. The segment at 1–215 is TBP/GTF2A-binding region; that stretch reads EQIMTNQMQG…PPRKKKNCHQ (215 aa). Residues 1–352 are CREBBP-binding region; that stretch reads EQIMTNQMQG…LPVSQNVHPP (352 aa). The NCOA1-binding region stretch occupies residues 1–418; the sequence is EQIMTNQMQG…YQESPQNSSS (418 aa). Residues 60–214 form an NCOA6IP-binding region region; that stretch reads VSNSPSQVMG…KPPRKKKNCH (155 aa). The segment covering 84-98 has biased composition (polar residues); it reads MAQQHTDPATTANND. S171 is modified (phosphoserine). Residues 174 to 178 carry the LXXLL motif motif; sequence LVNLL. The disordered stretch occupies residues 186–418; it reads HFGVNNKQNN…YQESPQNSSS (233 aa). Over residues 190-199 the composition is skewed to low complexity; that stretch reads NNKQNNTNAN. Residues 200 to 212 show a composition bias toward basic residues; that stretch reads KQKKKKPPRKKKN. Residues 269–279 are compositionally biased toward low complexity; the sequence is PLQQMPPQLMQ. The span at 282 to 310 shows a compositional bias: pro residues; that stretch reads APPPQPPQQQPQPQLPQQQPQPQPPPPSQ. A compositionally biased stretch (low complexity) spans 311–336; that stretch reads PQSQQQQQQQQQQQQQQMMMMLMMQQ. Asymmetric dimethylarginine occurs at positions 342 and 353. The span at 358–370 shows a compositional bias: polar residues; that stretch reads PDSQRVPMQQSGN. R391 bears the Asymmetric dimethylarginine mark. A compositionally biased stretch (polar residues) spans 399-418; that stretch reads PLGSNSRKMVYQESPQNSSS.

In terms of assembly, monomer and homodimer. Interacts in vitro with the basal transcription factors GTF2A and TBP, suggesting an autonomous transactivation function. Interacts with NCOA1, CRSP3, RBM14, the histone acetyltransferase proteins EP300 and CREBBP, and with methyltransferase proteins NCOA6IP and PRMT2. Component of the MLL2/3 complex (also named ASCOM complex), at least composed of KMT2D/MLL2 or KMT2C/MLL3, ASH2L, RBBP5, WDR5, NCOA6, DPY30, KDM6A, PAXIP1/PTIP, PAGR1 and alpha- and beta-tubulin. Interacts with ZNF335; may enhance ligand-dependent transcriptional activation by nuclear hormone receptors. Post-translationally, phosphorylated.

Its subcellular location is the nucleus. Nuclear receptor coactivator that directly binds nuclear receptors and stimulates the transcriptional activities in a hormone-dependent fashion. Coactivate expression in an agonist- and AF2-dependent manner. May coactivate expression via a remodeling of chromatin and its interaction with histone acetyltransferase proteins. Involved in the coactivation of different nuclear receptors, such as for steroids (GR and ERs), retinoids (RARs and RXRs), thyroid hormone (TRs), vitamin D3 (VDR) and prostanoids (PPARs). Probably functions as a general coactivator, rather than just a nuclear receptor coactivator. May also be involved in the coactivation of the NF-kappa-B pathway. This Rattus norvegicus (Rat) protein is Nuclear receptor coactivator 6 (Ncoa6).